The following is a 106-amino-acid chain: ATP-dependent Clp protease adapter protein ClpS (106 aa).

Positions 1–13 (MPRNTSHEHDHGL) are enriched in basic and acidic residues. Residues 1-20 (MPRNTSHEHDHGLMVEASKP) are disordered.

Belongs to the ClpS family. Binds to the N-terminal domain of the chaperone ClpA.

Functionally, involved in the modulation of the specificity of the ClpAP-mediated ATP-dependent protein degradation. This Xanthomonas axonopodis pv. citri (strain 306) protein is ATP-dependent Clp protease adapter protein ClpS.